The chain runs to 432 residues: Glutamate-1-semialdehyde 2,1-aminomutase (432 aa).

K272 bears the N6-(pyridoxal phosphate)lysine mark.

It belongs to the class-III pyridoxal-phosphate-dependent aminotransferase family. HemL subfamily. Homodimer. Pyridoxal 5'-phosphate is required as a cofactor.

The protein localises to the cytoplasm. It carries out the reaction (S)-4-amino-5-oxopentanoate = 5-aminolevulinate. It functions in the pathway porphyrin-containing compound metabolism; protoporphyrin-IX biosynthesis; 5-aminolevulinate from L-glutamyl-tRNA(Glu): step 2/2. It participates in porphyrin-containing compound metabolism; chlorophyll biosynthesis. This Picosynechococcus sp. (strain ATCC 27264 / PCC 7002 / PR-6) (Agmenellum quadruplicatum) protein is Glutamate-1-semialdehyde 2,1-aminomutase.